We begin with the raw amino-acid sequence, 430 residues long: Enolase (430 aa).

Glutamine 166 serves as a coordination point for (2R)-2-phosphoglycerate. The active-site Proton donor is glutamate 208. Aspartate 245, glutamate 288, and aspartate 315 together coordinate Mg(2+). (2R)-2-phosphoglycerate contacts are provided by lysine 340, arginine 369, serine 370, and lysine 391. Lysine 340 acts as the Proton acceptor in catalysis.

It belongs to the enolase family. The cofactor is Mg(2+).

Its subcellular location is the cytoplasm. It localises to the secreted. It is found in the cell surface. It carries out the reaction (2R)-2-phosphoglycerate = phosphoenolpyruvate + H2O. Its pathway is carbohydrate degradation; glycolysis; pyruvate from D-glyceraldehyde 3-phosphate: step 4/5. In terms of biological role, catalyzes the reversible conversion of 2-phosphoglycerate (2-PG) into phosphoenolpyruvate (PEP). It is essential for the degradation of carbohydrates via glycolysis. The sequence is that of Enolase from Clostridium kluyveri (strain NBRC 12016).